The chain runs to 411 residues: Serpin A3-2 (411 aa).

The N-terminal stretch at 1–24 is a signal peptide; it reads MRAERTSFLLALGLLVAGIRSVHC. N-linked (GlcNAc...) asparagine glycans are attached at residues N100, N180, N230, and N264.

The protein belongs to the serpin family. In terms of assembly, homodimer.

It is found in the cytoplasmic vesicle. The protein localises to the secretory vesicle. The protein resides in the chromaffin granule. It localises to the secreted. Functionally, serine protease inhibitor. The polypeptide is Serpin A3-2 (Bos taurus (Bovine)).